A 399-amino-acid polypeptide reads, in one-letter code: Endonuclease III homolog 1 (399 aa).

The transit peptide at 1–26 directs the protein to the mitochondrion; that stretch reads MQKISKYSSMAILRKRPLVKTETGPE. A Bipartite nuclear localization signal motif is present at residues 14-37; that stretch reads RKRPLVKTETGPESELLPEKRTKI. K194 is covalently cross-linked (Glycyl lysine isopeptide (Lys-Gly) (interchain with G-Cter in SUMO)). Positions 223–247 constitute a HhH domain; the sequence is FSSDVPATINELLGLPGVGPKMAYL. The Nucleophile; for N-glycosylase activity role is filled by K243.

Belongs to the Nth/MutY family. In terms of processing, monosumoylated. Sumoylation is associated with targeting of NTG1 to nuclei containing oxidative DNA damage.

It is found in the nucleus. The protein resides in the mitochondrion. The enzyme catalyses 2'-deoxyribonucleotide-(2'-deoxyribose 5'-phosphate)-2'-deoxyribonucleotide-DNA = a 3'-end 2'-deoxyribonucleotide-(2,3-dehydro-2,3-deoxyribose 5'-phosphate)-DNA + a 5'-end 5'-phospho-2'-deoxyribonucleoside-DNA + H(+). Functionally, bifunctional DNA N-glycosylase with associated apurinic/apyrimidinic (AP) lyase function that catalyzes the first step in base excision repair (BER), the primary repair pathway for the repair of oxidative DNA damage. The DNA N-glycosylase activity releases the damaged DNA base from DNA by cleaving the N-glycosidic bond, leaving an AP site. The AP-lyase activity cleaves the phosphodiester bond 3' to the AP site by a beta-elimination. Primarily recognizes and repairs oxidative base damage of pyrimidines, but also purine-derived lesions, alkylation damage and cytosine photoproducts generated by UV irradiation as well as abasic sites. Also has 8-oxoguanine DNA glycosylase activity. The AP lyase can incise AP sites opposite all four bases. May also play a role in the regulation of mtDNA copy number by introducing a double-stranded break (DSB) at the mtDNA replication origin ori5, initiating the rolling-circle mtDNA replication. The protein is Endonuclease III homolog 1 of Saccharomyces cerevisiae (strain ATCC 204508 / S288c) (Baker's yeast).